We begin with the raw amino-acid sequence, 309 residues long: Taste receptor type 2 member 46 (309 aa).

Methionine 1 is a topological domain (extracellular). Residues 2-22 (ITFLPIIFSILIVVTFVIGNF) form a helical membrane-spanning segment. Residues 23–46 (ANGFIALANSIEWFKRQKISFADQ) lie on the Cytoplasmic side of the membrane. A helical membrane pass occupies residues 47–67 (ILTALAVSRVGLLWVLLLNWY). Residues 68-86 (ATELNPAFYSIEVRITAYN) lie on the Extracellular side of the membrane. The helical transmembrane segment at 87–107 (LWAVINHFSNWLATSLSIFYL) threads the bilayer. The Cytoplasmic portion of the chain corresponds to 108–126 (LKIANFSNLIFLCLKRRVK). The chain crosses the membrane as a helical span at residues 127–147 (SVVLVILLGPLLFLVCHLFVI). At 148–178 (NMNQIIWTKEYEGNMTWKIKLRSAMYLSNTT) the chain is on the extracellular side. Residues asparagine 161 and asparagine 176 are each glycosylated (N-linked (GlcNAc...) asparagine). The chain crosses the membrane as a helical span at residues 179–199 (VTILANLVPFTLTLISFLLLI). At 200 to 229 (CSLCKHLEKMQLHGKGSQDPSMKVHIKALQ) the chain is on the cytoplasmic side. The chain crosses the membrane as a helical span at residues 230–250 (TVTSFLLLCAIYFLSIIMSVW). The Extracellular segment spans residues 251 to 259 (SFESLENKP). Residues 260–280 (VFMFCEAITFSYPSTHPFILI) form a helical membrane-spanning segment. At 281-309 (WGNKKLKQTFLSVLWHVRYWVKGEKPSXP) the chain is on the cytoplasmic side.

This sequence belongs to the G-protein coupled receptor T2R family.

The protein resides in the membrane. It is found in the cell projection. The protein localises to the cilium membrane. Functionally, receptor that may play a role in the perception of bitterness and is gustducin-linked. May play a role in sensing the chemical composition of the gastrointestinal content. The activity of this receptor may stimulate alpha gustducin, mediate PLC-beta-2 activation and lead to the gating of TRPM5. In airway epithelial cells, binding of bitter compounds increases the intracellular calcium ion concentration and stimulates ciliary beat frequency. This chain is Taste receptor type 2 member 46 (TAS2R46), found in Pan troglodytes (Chimpanzee).